The following is a 244-amino-acid chain: NAD-dependent protein deacetylase (244 aa).

Residues 1–244 (MSATERQLQY…IGDTCRQLRA (244 aa)) enclose the Deacetylase sirtuin-type domain. NAD(+)-binding residues include Ala27, Thr31, Phe38, Arg39, Gln107, Ile109, Asp110, and His125. Phe38 serves as a coordination point for nicotinamide. The nicotinamide site is built by Ile109 and Asp110. His125 (proton acceptor) is an active-site residue. Zn(2+) contacts are provided by Cys133, Cys136, Cys153, and Cys156. NAD(+) is bound by residues Ser192, Ser193, Asn217, and Ile235.

The protein belongs to the sirtuin family. Class U subfamily. The cofactor is Zn(2+).

It localises to the cytoplasm. The enzyme catalyses N(6)-acetyl-L-lysyl-[protein] + NAD(+) + H2O = 2''-O-acetyl-ADP-D-ribose + nicotinamide + L-lysyl-[protein]. In terms of biological role, NAD-dependent protein deacetylase which modulates the activities of several enzymes which are inactive in their acetylated form. The protein is NAD-dependent protein deacetylase of Chromobacterium violaceum (strain ATCC 12472 / DSM 30191 / JCM 1249 / CCUG 213 / NBRC 12614 / NCIMB 9131 / NCTC 9757 / MK).